The sequence spans 639 residues: Probable endo-1,3(4)-beta-glucanase ACLA_073210 (639 aa).

The signal sequence occupies residues Met1–Ala21. One can recognise a GH16 domain in the interval Ile26–Gly290. Asn65 carries an N-linked (GlcNAc...) asparagine glycan. The active-site Nucleophile is the Glu146. Glu151 acts as the Proton donor in catalysis. 2 disordered regions span residues Thr337 to Glu384 and Gln442 to Ile545. Polar residues predominate over residues Ala339–His348. 2 stretches are compositionally biased toward low complexity: residues Pro362–Ala376 and Thr478–Thr488. Ala617 is lipidated: GPI-anchor amidated alanine. Residues Gly618–Ala639 constitute a propeptide, removed in mature form.

The protein belongs to the glycosyl hydrolase 16 family.

It localises to the cell membrane. The catalysed reaction is Endohydrolysis of (1-&gt;3)- or (1-&gt;4)-linkages in beta-D-glucans when the glucose residue whose reducing group is involved in the linkage to be hydrolyzed is itself substituted at C-3.. Its function is as follows. Mixed-linked glucanase involved in the degradation of complex natural cellulosic substrates. This chain is Probable endo-1,3(4)-beta-glucanase ACLA_073210, found in Aspergillus clavatus (strain ATCC 1007 / CBS 513.65 / DSM 816 / NCTC 3887 / NRRL 1 / QM 1276 / 107).